A 326-amino-acid polypeptide reads, in one-letter code: Cell surface glycoprotein CD200 receptor 1 (326 aa).

Residues 1–25 (MFCFWRTSALAVLLIWGVFVAGSSC) form the signal peptide. The Extracellular segment spans residues 26–238 (TDKNQTTQNN…SRGGNQSLRP (213 aa)). Asn29, Asn34, Asn35, Asn44, Asn93, Asn101, Asn159, Asn192, Asn207, Asn221, and Asn233 each carry an N-linked (GlcNAc...) asparagine glycan. One can recognise an Ig-like V-type domain in the interval 51–136 (IGTKALLCCF…YTCETVTPEG (86 aa)). 2 cysteine pairs are disulfide-bonded: Cys58-Cys129 and Cys82-Cys97. The Ig-like C2-type domain maps to 138–229 (FEKNYDLQVL…GNQSLSIELS (92 aa)). Disulfide bonds link Cys164–Cys213 and Cys183–Cys201. The chain crosses the membrane as a helical span at residues 239–259 (YIPYIIPSIIILIIIGCICLL). Over 260 to 326 (KISGFRKCKL…DCLTLSAIGI (67 aa)) the chain is Cytoplasmic.

This sequence belongs to the CD200R family. As to quaternary structure, CD200 and CD200R1 interact via their respective N-terminal Ig-like domains. In terms of tissue distribution, expressed in granulocytes, monocytes, most T-cells and a subset of NK, NKT and B-cells (at protein level). Expressed in the spleen, lung, liver, testis, bone marrow, lymph nodes, spinal cord, kidney, uterus and small intestine. Expressed in mast and dendritic cells. Expressed in the lung of N.brasiliensis-infected mice.

It localises to the cell membrane. Its function is as follows. Inhibitory receptor for the CD200/OX2 cell surface glycoprotein. Limits inflammation by inhibiting the expression of pro-inflammatory molecules including TNF-alpha, interferons, and inducible nitric oxide synthase (iNOS) in response to selected stimuli. The chain is Cell surface glycoprotein CD200 receptor 1 (Cd200r1) from Mus musculus (Mouse).